The following is a 1503-amino-acid chain: ATP-binding cassette sub-family C member 6 (1503 aa).

Residues 1–31 (MAAPAEPCAGQGVWNQTEPEPAATSLLSLCF) are Extracellular-facing. N-linked (GlcNAc...) asparagine glycosylation occurs at Asn-15. Residues 32–52 (LRTAGVWVPPMYLWVLGPIYL) traverse the membrane as a helical segment. Residues 53 to 72 (LFIHHHGRGYLRMSPLFKAK) are Cytoplasmic-facing. Residues 73 to 93 (MVLGFALIVLCTSSVAVALWK) form a helical membrane-spanning segment. At 94 to 98 (IQQGT) the chain is on the extracellular side. A helical membrane pass occupies residues 99–119 (PEAPEFLIHPTVWLTTMSFAV). The Cytoplasmic portion of the chain corresponds to 120–131 (FLIHTERKKGVQ). Residues 132–149 (SSGVLFGYWLLCFVLPAT) traverse the membrane as a helical segment. Over 150 to 167 (NAAQQASGAGFQSDPVRH) the chain is Extracellular. The helical transmembrane segment at 168 to 188 (LSTYLCLSLVVAQFVLSCLAD) threads the bilayer. Over 189–302 (QPPFFPEDPQ…GSQWRPLLKA (114 aa)) the chain is Cytoplasmic. A helical membrane pass occupies residues 303-323 (IWQVFHSTFLLGTLSLIISDV). Positions 311-593 (FLLGTLSLII…LPFSIHSLVQ (283 aa)) constitute an ABC transmembrane type-1 1 domain. The Extracellular portion of the chain corresponds to 324–349 (FRFTVPKLLSLFLEFIGDPKPPAWKG). A helical transmembrane segment spans residues 350-370 (YLLAVLMFLSACLQTLFEQQN). Residues 371-426 (MYRLKVLQMRLRSAITGLVYRKVLALSSGSRKASAVGDVVNLVSVDVQRLTESVLY) are Cytoplasmic-facing. Residues 427 to 447 (LNGLWLPLVWIVVCFVYLWQL) form a helical membrane-spanning segment. At 448–450 (LGP) the chain is on the extracellular side. A helical transmembrane segment spans residues 451–471 (SALTAIAVFLSLLPLNFFISK). Over 472–533 (KRNHHQEEQM…ALRTSGLLFS (62 aa)) the chain is Cytoplasmic. Residues 534–554 (VSLVSFQVSTFLVALVVFAVH) traverse the membrane as a helical segment. Residues 555 to 575 (TLVAENAMNAEKAFVTLTVLN) lie on the Extracellular side of the membrane. Residues 576–596 (ILNKAQAFLPFSIHSLVQARV) traverse the membrane as a helical segment. At 597–939 (SFDRLVTFLC…VKATVHLAYL (343 aa)) the chain is on the cytoplasmic side. The 225-residue stretch at 629 to 853 (ITIHSATFAW…KGALMCLLDQ (225 aa)) folds into the ABC transporter 1 domain. Residue 663–670 (GPVGAGKS) coordinates ATP. Residues 854 to 919 (ARQPGDRGEG…LDDPDRAGWP (66 aa)) form a disordered region. Basic and acidic residues predominate over residues 881 to 901 (RRPELRRERSIKSVPEKDRTT). The chain crosses the membrane as a helical span at residues 940-960 (RAVGTPLCLYALFLFLCQQVA). The ABC transmembrane type-1 2 domain maps to 947–1228 (CLYALFLFLC…VVRNWTDLEN (282 aa)). The Extracellular portion of the chain corresponds to 961–997 (SFCRGYWLSLWADDPAVGGQQTQAALRGGIFGLLGCL). Residues 998-1018 (QAIGLFASMAAVLLGGARASR) traverse the membrane as a helical segment. Residues 1019 to 1061 (LLFQRLLWDVVRSPISFFERTPIGHLLNRFSKETDTVDVDIPD) lie on the Cytoplasmic side of the membrane. Residues 1062-1082 (KLRSLLMYAFGLLEVSLVVAV) form a helical membrane-spanning segment. Position 1083 (Ala-1083) is a topological domain, extracellular. A helical membrane pass occupies residues 1084-1104 (TPLATVAILPLFLLYAGFQSL). At 1105–1175 (YVVSSCQLRR…VADRWLAANV (71 aa)) the chain is on the cytoplasmic side. A helical transmembrane segment spans residues 1176 to 1196 (ELLGNGLVFAAATCAVLSKAH). At 1197–1198 (LS) the chain is on the extracellular side. Residues 1199–1219 (AGLVGFSVSAALQVTQTLQWV) traverse the membrane as a helical segment. Residues 1220–1503 (VRNWTDLENS…YRLAQESGLV (284 aa)) are Cytoplasmic-facing. The region spanning 1265 to 1499 (IEFRDFGLRY…KGLFYRLAQE (235 aa)) is the ABC transporter 2 domain. Ser-1286 carries the phosphoserine modification. 1299–1306 (GRTGAGKS) is a binding site for ATP.

Belongs to the ABC transporter superfamily. ABCC family. Conjugate transporter (TC 3.A.1.208) subfamily. Mg(2+) serves as cofactor. In terms of processing, glycosylated. As to expression, expressed in kidney and liver. Very low expression in other tissues. In testis, localized to peritubular myoid cells, Leydig cells, along the basal membrane of Sertoli cells and moderately in the adluminal compartment of the seminiferous tubules.

The protein localises to the basal cell membrane. It localises to the basolateral cell membrane. The protein resides in the endoplasmic reticulum membrane. It catalyses the reaction an S-substituted glutathione(in) + ATP + H2O = an S-substituted glutathione(out) + ADP + phosphate + H(+). The catalysed reaction is leukotriene C4(in) + ATP + H2O = leukotriene C4(out) + ADP + phosphate + H(+). Its activity is regulated as follows. LTC4 transport is completely inhibited by 1 mM orthovanadate. Its function is as follows. ATP-dependent transporter of the ATP-binding cassette (ABC) family that actively extrudes physiological compounds, and xenobiotics from cells. Mediates ATP-dependent transport of glutathione conjugates such as leukotriene-c4 (LTC4) and N-ethylmaleimide S-glutathione (NEM-GS) (in vitro), and an anionic cyclopentapeptide endothelin antagonist, BQ-123. May contribute to regulate the transport of organic compounds in testes across the blood-testis-barrier. Does not appear to actively transport drugs outside the cell. Confers low levels of cellular resistance to etoposide, teniposide, anthracyclines and cisplatin. Functionally, mediates the release of nucleoside triphosphates, predominantly ATP, into the circulation, where it is rapidly converted into AMP and the mineralization inhibitor inorganic pyrophosphate (PPi) by the ecto-enzyme ectonucleotide pyrophosphatase phosphodiesterase 1 (ENPP1), therefore playing a role in PPi homeostasis. In terms of biological role, inhibits TNF-alpha-mediated apoptosis through blocking one or more caspases. The polypeptide is ATP-binding cassette sub-family C member 6 (ABCC6) (Homo sapiens (Human)).